A 445-amino-acid chain; its full sequence is Phosphoglucosamine mutase (445 aa).

Serine 102 acts as the Phosphoserine intermediate in catalysis. Mg(2+) is bound by residues serine 102, aspartate 241, aspartate 243, and aspartate 245. Serine 102 is modified (phosphoserine).

Belongs to the phosphohexose mutase family. Requires Mg(2+) as cofactor. Post-translationally, activated by phosphorylation.

It carries out the reaction alpha-D-glucosamine 1-phosphate = D-glucosamine 6-phosphate. Its function is as follows. Catalyzes the conversion of glucosamine-6-phosphate to glucosamine-1-phosphate. The chain is Phosphoglucosamine mutase from Proteus mirabilis (strain HI4320).